A 166-amino-acid chain; its full sequence is Orotate phosphoribosyltransferase (166 aa).

5-phospho-alpha-D-ribose 1-diphosphate is bound by residues arginine 83, lysine 84, histidine 89, and 109–117; that span reads DDVATTGGS. Orotate is bound by residues threonine 113 and arginine 141.

Belongs to the purine/pyrimidine phosphoribosyltransferase family. PyrE subfamily. In terms of assembly, homodimer. It depends on Mg(2+) as a cofactor.

It carries out the reaction orotidine 5'-phosphate + diphosphate = orotate + 5-phospho-alpha-D-ribose 1-diphosphate. It functions in the pathway pyrimidine metabolism; UMP biosynthesis via de novo pathway; UMP from orotate: step 1/2. Catalyzes the transfer of a ribosyl phosphate group from 5-phosphoribose 1-diphosphate to orotate, leading to the formation of orotidine monophosphate (OMP). The sequence is that of Orotate phosphoribosyltransferase from Picrophilus torridus (strain ATCC 700027 / DSM 9790 / JCM 10055 / NBRC 100828 / KAW 2/3).